A 254-amino-acid chain; its full sequence is Imidazole glycerol phosphate synthase subunit HisF (254 aa).

Active-site residues include Asp-12 and Asp-131.

Belongs to the HisA/HisF family. As to quaternary structure, heterodimer of HisH and HisF.

It localises to the cytoplasm. It carries out the reaction 5-[(5-phospho-1-deoxy-D-ribulos-1-ylimino)methylamino]-1-(5-phospho-beta-D-ribosyl)imidazole-4-carboxamide + L-glutamine = D-erythro-1-(imidazol-4-yl)glycerol 3-phosphate + 5-amino-1-(5-phospho-beta-D-ribosyl)imidazole-4-carboxamide + L-glutamate + H(+). The protein operates within amino-acid biosynthesis; L-histidine biosynthesis; L-histidine from 5-phospho-alpha-D-ribose 1-diphosphate: step 5/9. In terms of biological role, IGPS catalyzes the conversion of PRFAR and glutamine to IGP, AICAR and glutamate. The HisF subunit catalyzes the cyclization activity that produces IGP and AICAR from PRFAR using the ammonia provided by the HisH subunit. The polypeptide is Imidazole glycerol phosphate synthase subunit HisF (Herminiimonas arsenicoxydans).